A 697-amino-acid polypeptide reads, in one-letter code: MARTTPLERYRNFGIMAHIDAGKTTTTERILFYTGVTHKIGEVHEGTTVMDWMEQERERGITITSAATTAFWRDHRLNIIDTPGHVDFTIEVERSLRVLDGACAVFDAVQGVQPQSETVWRQADKYEVPRICFINKMDRVGADYFHAVDTIREKLGARPLPLHVPIGAEDKFRGMVDLLKMKGITFDDETMGAKYQEVEIPADLAAQAKEYRAKLEETVAEIDDELMAKYLDGKPLSNDELMRGIRRGTLEMKFFPVLCGTAFKNKGVQQILDAVVDFLPSPVDIPAMKGVDAKGNDVVRKTSDAEPFSALAFKIMNDPFVGNLTFFRVYSGRLEAGSYVYNSTKDKKERIGRLLQMHANKREEIKEVYAGDIAAAVGLRASTTGDTLCAEDAPVILERMEFPEPVIHIAIEPKTKGDQDKMGVALQRLQMEDPSFRVHTDEETGQTIIGGMGELHLEILVDRMFREFKVEANVGKPQVAYRETITRTVEAEGRYIRQTGGRGQYGHCWLRLHPQEPGKGFEFENAIVGGVIPKEFISPIQKGIEEAMTSGVLAGYPMVDLKVELFDGSYHDVDSSEMAFKIAGSMGFKEGAAKASPVLLEPIMAVEVTTPDDYMGDVIGDLNSRRGKIHAMNPRAGVQVIEAHVPLAEMFGYATDLRSKTQGRATYSMQFAHYAQVPASIAETIVTKAKGVAAGAK.

In terms of domain architecture, tr-type G spans 8–283; that stretch reads ERYRNFGIMA…AVVDFLPSPV (276 aa). Residues 17-24, 81-85, and 135-138 each bind GTP; these read AHIDAGKT, DTPGH, and NKMD.

It belongs to the TRAFAC class translation factor GTPase superfamily. Classic translation factor GTPase family. EF-G/EF-2 subfamily.

It is found in the cytoplasm. Catalyzes the GTP-dependent ribosomal translocation step during translation elongation. During this step, the ribosome changes from the pre-translocational (PRE) to the post-translocational (POST) state as the newly formed A-site-bound peptidyl-tRNA and P-site-bound deacylated tRNA move to the P and E sites, respectively. Catalyzes the coordinated movement of the two tRNA molecules, the mRNA and conformational changes in the ribosome. This is Elongation factor G 1 from Anaeromyxobacter dehalogenans (strain 2CP-C).